The primary structure comprises 547 residues: Phosphomethylpyrimidine synthase (547 aa).

Residues asparagine 146, methionine 175, tyrosine 204, histidine 240, 260-262, 301-304, and glutamate 340 contribute to the substrate site; these read SRG and DGLR. Residue histidine 344 coordinates Zn(2+). Tyrosine 367 serves as a coordination point for substrate. Histidine 408 is a binding site for Zn(2+). [4Fe-4S] cluster-binding residues include cysteine 488, cysteine 491, and cysteine 496.

This sequence belongs to the ThiC family. The cofactor is [4Fe-4S] cluster.

It carries out the reaction 5-amino-1-(5-phospho-beta-D-ribosyl)imidazole + S-adenosyl-L-methionine = 4-amino-2-methyl-5-(phosphooxymethyl)pyrimidine + CO + 5'-deoxyadenosine + formate + L-methionine + 3 H(+). Its pathway is cofactor biosynthesis; thiamine diphosphate biosynthesis. Functionally, catalyzes the synthesis of the hydroxymethylpyrimidine phosphate (HMP-P) moiety of thiamine from aminoimidazole ribotide (AIR) in a radical S-adenosyl-L-methionine (SAM)-dependent reaction. This Mycobacterium bovis (strain ATCC BAA-935 / AF2122/97) protein is Phosphomethylpyrimidine synthase.